Consider the following 300-residue polypeptide: D-alanine--D-alanine ligase (300 aa).

One can recognise an ATP-grasp domain in the interval 99–293 (KKILKYANIN…FAELLNSIVK (195 aa)). 126–181 (IEKIGYPVFVKPNSGGSSVATNLVKDKEGIKEAVELALKYDKEVMIENYTKGEEIT) provides a ligand contact to ATP. Mg(2+) is bound by residues D248, E260, and N262.

This sequence belongs to the D-alanine--D-alanine ligase family. Mg(2+) serves as cofactor. The cofactor is Mn(2+).

It localises to the cytoplasm. It catalyses the reaction 2 D-alanine + ATP = D-alanyl-D-alanine + ADP + phosphate + H(+). It functions in the pathway cell wall biogenesis; peptidoglycan biosynthesis. Functionally, cell wall formation. In Clostridium botulinum (strain Langeland / NCTC 10281 / Type F), this protein is D-alanine--D-alanine ligase.